Here is a 119-residue protein sequence, read N- to C-terminus: Autophagy-related protein 8h (119 aa).

G119 carries the Phosphatidylethanolamine amidated glycine lipid modification.

It belongs to the ATG8 family. As to quaternary structure, interacts with ATG4. Interacts with ATI1. Post-translationally, gly-119 forms then a thioester bond with the 'Cys-558' of ATG7 (E1-like activating enzyme) before being transferred to the 'Cys-258' of ATG3 (the specific E2 conjugating enzyme), in order to be finally amidated with phosphatidylethanolamine. This lipid modification anchors ATG8 to autophagosomes. In terms of tissue distribution, constitutively expressed.

Its subcellular location is the cytoplasmic vesicle. The protein resides in the autophagosome membrane. It localises to the vacuole membrane. The protein localises to the cytoplasm. It is found in the cytoskeleton. Functionally, ubiquitin-like modifier involved in autophagosomes formation. May mediate the delivery of the autophagosomes to the vacuole via the microtubule cytoskeleton. The chain is Autophagy-related protein 8h (ATG8H) from Arabidopsis thaliana (Mouse-ear cress).